Consider the following 569-residue polypeptide: Urease subunit alpha (569 aa).

The Urease domain occupies 132 to 569 (GGVDTHIHFI…VPLGQRYFLF (438 aa)). Ni(2+)-binding residues include H137, H139, and K220. K220 bears the N6-carboxylysine mark. A substrate-binding site is contributed by H222. Ni(2+) is bound by residues H249 and H275. H323 (proton donor) is an active-site residue. Ni(2+) is bound at residue D363.

Belongs to the metallo-dependent hydrolases superfamily. Urease alpha subunit family. As to quaternary structure, heterotrimer of UreA (gamma), UreB (beta) and UreC (alpha) subunits. Three heterotrimers associate to form the active enzyme. Ni cation is required as a cofactor. Carboxylation allows a single lysine to coordinate two nickel ions.

The protein localises to the cytoplasm. It catalyses the reaction urea + 2 H2O + H(+) = hydrogencarbonate + 2 NH4(+). It functions in the pathway nitrogen metabolism; urea degradation; CO(2) and NH(3) from urea (urease route): step 1/1. This Bacillus subtilis (strain 168) protein is Urease subunit alpha.